Here is a 248-residue protein sequence, read N- to C-terminus: Pyruvate formate-lyase-activating enzyme (248 aa).

The Radical SAM core domain maps to 17–248 (VDGPGIRFIV…NKILETSSYK (232 aa)). 3 residues coordinate [4Fe-4S] cluster: Cys31, Cys35, and Cys38. Residues 37-39 (FCH), Gly80, 135-137 (DIK), and His208 each bind S-adenosyl-L-methionine.

It belongs to the organic radical-activating enzymes family. The cofactor is [4Fe-4S] cluster.

It localises to the cytoplasm. It catalyses the reaction glycyl-[formate C-acetyltransferase] + reduced [flavodoxin] + S-adenosyl-L-methionine = glycin-2-yl radical-[formate C-acetyltransferase] + semiquinone [flavodoxin] + 5'-deoxyadenosine + L-methionine + H(+). Functionally, activation of pyruvate formate-lyase under anaerobic conditions by generation of an organic free radical, using S-adenosylmethionine and reduced flavodoxin as cosubstrates to produce 5'-deoxy-adenosine. The protein is Pyruvate formate-lyase-activating enzyme (pflA) of Listeria innocua serovar 6a (strain ATCC BAA-680 / CLIP 11262).